The following is a 953-amino-acid chain: Zinc finger CCCH domain-containing protein 18 (953 aa).

Met-1 is modified (N-acetylmethionine). Residues 1–14 are compositionally biased toward basic and acidic residues; sequence MDVAESPERDPHSP. Disordered regions lie at residues 1–222 and 391–928; these read MDVA…RPRP and QYTE…LSRR. Ser-6 is modified (phosphoserine). The segment covering 15 to 26 has biased composition (acidic residues); that stretch reads EDEEQPQGLSDD. Residues Ser-34, Ser-46, Ser-53, Ser-59, Ser-67, Ser-74, Ser-78, Ser-83, and Ser-95 each carry the phosphoserine modification. A compositionally biased stretch (acidic residues) spans 60 to 72; sequence QEEEDNHSDEEDR. Residues 97 to 106 show a composition bias toward acidic residues; that stretch reads CEEEGDEGEE. The stretch at 105–134 forms a coiled coil; sequence EEDRTSDLRDEASSVTRELDEHELDYDEEV. The span at 107-124 shows a compositional bias: basic and acidic residues; that stretch reads DRTSDLRDEASSVTRELD. Thr-109 carries the post-translational modification Phosphothreonine. 2 positions are modified to phosphoserine: Ser-110 and Ser-118. 2 stretches are compositionally biased toward acidic residues: residues 125-136 and 143-158; these read EHELDYDEEVPE and QEDEAEKAGAEDDEEK. A compositionally biased stretch (basic and acidic residues) spans 159 to 168; it reads GEGTPREEGK. Thr-162 is subject to Phosphothreonine. Phosphoserine is present on residues Ser-173 and Ser-179. Residues 175-190 show a composition bias toward basic and acidic residues; sequence GEKESLEAAKEKKKED. Over residues 191–207 the composition is skewed to acidic residues; the sequence is DDGEIDDGEIDDDDLEE. The span at 208–217 shows a compositional bias: basic and acidic residues; that stretch reads GEVKDPSDRK. The C3H1-type zinc finger occupies 219–245; it reads RPRPTCRFFMKGNCTWGMNCRFIHPGV. Basic and acidic residues predominate over residues 396 to 482; the sequence is EPYHNYRERE…EKEREKEKGK (87 aa). Residues 399 to 464 adopt a coiled-coil conformation; the sequence is HNYRERERER…RERAKRDEKD (66 aa). A Phosphoserine modification is found at Ser-487. Lys-510 participates in a covalent cross-link: Glycyl lysine isopeptide (Lys-Gly) (interchain with G-Cter in SUMO2). Over residues 510–520 the composition is skewed to basic and acidic residues; that stretch reads KRADEWKDPWR. Residues Ser-532, Ser-534, and Ser-536 each carry the phosphoserine modification. Over residues 545 to 606 the composition is skewed to low complexity; that stretch reads SASSASASNS…SRSRSFSSSP (62 aa). Residues Lys-622 and Lys-661 each participate in a glycyl lysine isopeptide (Lys-Gly) (interchain with G-Cter in SUMO2) cross-link. The segment covering 661–670 has biased composition (basic and acidic residues); sequence KPGDPREARR. Low complexity-rich tracts occupy residues 692 to 725 and 736 to 750; these read GSSYSGSSSRSRSLSVSSVSSVSSATSSSSSAHS and ASPVSSASSRSPAPA. Residues 760–774 are compositionally biased toward basic and acidic residues; that stretch reads KKEDGVKEEKRKRDS. Lys-766 is covalently cross-linked (Glycyl lysine isopeptide (Lys-Gly) (interchain with G-Cter in SUMO2)). Over residues 778 to 798 the composition is skewed to low complexity; sequence PPKSAKPPAGGKSSQQPSTPQ. Lys-814 is subject to N6-acetyllysine. Lys-817 participates in a covalent cross-link: Glycyl lysine isopeptide (Lys-Gly) (interchain with G-Cter in SUMO2). Residues 824–841 are compositionally biased toward basic and acidic residues; that stretch reads AADKGSRKRYEPSDKDRQ. A phosphoserine mark is found at Ser-842, Ser-852, Ser-868, Ser-893, and Ser-896. Residues 893–906 show a composition bias toward low complexity; sequence SPQSKSSSKVTSVP. A Glycyl lysine isopeptide (Lys-Gly) (interchain with G-Cter in SUMO2) cross-link involves residue Lys-908. Over residues 916-925 the composition is skewed to polar residues; sequence STKSGKASTL. The stretch at 921–950 forms a coiled coil; the sequence is KASTLSRREELLKQLKAVEDAIARKRAKIP.

In terms of assembly, interacts with ZFC3H1 in a RNase-insensitive manner.

It localises to the nucleus. The polypeptide is Zinc finger CCCH domain-containing protein 18 (Homo sapiens (Human)).